Here is a 339-residue protein sequence, read N- to C-terminus: Probable cytosolic iron-sulfur protein assembly protein CIAO1 (339 aa).

WD repeat units follow at residues H14 to K53, G59 to V98, G103 to C142, S148 to C187, G192 to G231, F250 to Q289, and A301 to I339. Positions L176 to R178 match the LYR motif; required for interaction with HSC20 motif.

It belongs to the WD repeat CIA1 family. As to quaternary structure, component of the CIA complex. Interacts with CIAO2A and forms a complex with CIAO2B and MMS19; the interactions with CIAO2A and CIAO2B are mutually exclusive. Interacts with CHD1L, ERCC2, IREB2 and POLD1. Component of the MMXD complex, which includes CIAO1, ERCC2, CIAO2B, MMS19 and SLC25A5. Interacts with WT1. Interacts with CIAO3. Interacts (via LYR motif) with HSC20.

Its subcellular location is the cytoplasm. In terms of biological role, key component of the cytosolic iron-sulfur protein assembly (CIA) complex, a multiprotein complex that mediates the incorporation of iron-sulfur cluster into extramitochondrial Fe/S proteins. As a CIA complex component, interacts specifically with CIAO2A or CIAO2B and MMS19 to assist different branches of iron-sulfur protein assembly, depending of its interactors. The complex CIAO1:CIAO2B:MMS19 binds to and facilitates the assembly of most cytosolic-nuclear Fe/S proteins. CIAO1:CIAO2A specifically matures ACO1 and stabilizes IREB2. Seems to specifically modulate the transactivation activity of WT1. As part of the mitotic spindle-associated MMXD complex it may play a role in chromosome segregation. The sequence is that of Probable cytosolic iron-sulfur protein assembly protein CIAO1 from Bos taurus (Bovine).